The chain runs to 203 residues: RNA chaperone ProQ (203 aa).

A disordered region spans residues 111 to 138 (KAKRQALAPKKPAKKVAPKRAPAVKKER).

The protein belongs to the ProQ family.

Its subcellular location is the cytoplasm. Functionally, RNA chaperone with significant RNA binding, RNA strand exchange and RNA duplexing activities. This chain is RNA chaperone ProQ, found in Shewanella frigidimarina (strain NCIMB 400).